A 1297-amino-acid chain; its full sequence is Phosphoribosylformylglycinamidine synthase (1297 aa).

A disordered region spans residues 303-329 (ISPFPGAATGSGGEIRDEGATGRGAKP). 308-319 (GAATGSGGEIRD) contacts ATP. Residues D680, E719, N723, and D887 each contribute to the Mg(2+) site. Residue S889 participates in ATP binding. A Glutamine amidotransferase type-1 domain is found at 1045 to 1297 (IAILREQGVN…RLFRNARMVF (253 aa)). The active-site Nucleophile is the C1138. Active-site residues include H1263 and E1265.

It in the N-terminal section; belongs to the FGAMS family. As to quaternary structure, monomer.

The protein localises to the cytoplasm. The enzyme catalyses N(2)-formyl-N(1)-(5-phospho-beta-D-ribosyl)glycinamide + L-glutamine + ATP + H2O = 2-formamido-N(1)-(5-O-phospho-beta-D-ribosyl)acetamidine + L-glutamate + ADP + phosphate + H(+). It participates in purine metabolism; IMP biosynthesis via de novo pathway; 5-amino-1-(5-phospho-D-ribosyl)imidazole from N(2)-formyl-N(1)-(5-phospho-D-ribosyl)glycinamide: step 1/2. Its function is as follows. Phosphoribosylformylglycinamidine synthase involved in the purines biosynthetic pathway. Catalyzes the ATP-dependent conversion of formylglycinamide ribonucleotide (FGAR) and glutamine to yield formylglycinamidine ribonucleotide (FGAM) and glutamate. This chain is Phosphoribosylformylglycinamidine synthase, found in Haemophilus influenzae (strain 86-028NP).